The chain runs to 485 residues: Pre-glycoprotein polyprotein GP complex (485 aa).

Residue glycine 2 is the site of N-myristoyl glycine; by host attachment. Topologically, residues 2 to 17 are extracellular; the sequence is GQLISFFGEIPTILQE. The chain crosses the membrane as a helical span at residues 18-33; it reads ALNIALIAVSIIATIK. Over 34 to 58 the chain is Cytoplasmic; it reads GVVNVWKSGLIQLLMFVMLAGRSCS. Cysteine 57 contributes to the Zn(2+) binding site. Topologically, residues 59-424 are extracellular; it reads VQIGHHLELE…QGRTPLSLVD (366 aa). Disulfide bonds link cysteine 85–cysteine 225, cysteine 271–cysteine 284, cysteine 293–cysteine 302, and cysteine 356–cysteine 377. 4 N-linked (GlcNAc...) asparagine; by host glycosylation sites follow: asparagine 88, asparagine 128, asparagine 179, and asparagine 218. Residues asparagine 357, asparagine 365, asparagine 382, and asparagine 387 are each glycosylated (N-linked (GlcNAc...) asparagine; by host). Residues 425 to 445 form a helical membrane-spanning segment; that stretch reads VCFWSTLFYTASIFLHLIRIP. Residues 446-485 are Cytoplasmic-facing; that stretch reads THRHIVGEGCPKPHRLRADSTCACGLYKQKRRPLKWVRSN. Zn(2+) is bound by residues histidine 447, histidine 449, cysteine 455, histidine 459, cysteine 467, and cysteine 469.

This sequence belongs to the arenaviridae GPC protein family. Interacts with glycoprotein G2. Part of the GP complex (GP-C) together with glycoprotein G1 and glycoprotein G2. The GP-complex interacts with protein Z, which interacts with ribonucleocapsid; these interactions may induce virion budding. As to quaternary structure, homotrimer; disulfide-linked. In pre-fusion state, G1 homotrimers bind G2 homotrimers via ionic interactions. Part of the GP complex (GP-C) together with glycoprotein G2 and the stable signal peptide. The GP-complex interacts with protein Z, which interacts with ribonucleocapsid; these interactions may induce virion budding. In terms of assembly, homotrimer. Interacts with the stable signal peptide. In pre-fusion state, G2 homotrimers bind G1 homotrimers via ionic interactions. Part of the GP complex (GP-C) together with glycoprotein G1 and the stable signal peptide. Acidification in the endosome triggers rearrangements, which ultimately leads to a 6 helix bundle formed by the two heptad repeat domains (HR1 and HR2) in post-fusion state. The GP-complex interacts with protein Z, which interacts with ribonucleocapsid; these interactions may induce virion budding. In terms of processing, specific enzymatic cleavages in vivo yield mature proteins. GP-C polyprotein is cleaved in the endoplasmic reticulum by the host protease MBTPS1. Only cleaved glycoprotein is incorporated into virions. Post-translationally, the SSP remains stably associated with the GP complex following cleavage by signal peptidase and plays crucial roles in the trafficking of GP through the secretory pathway. Myristoylation is necessary for GP2-mediated fusion activity.

Its subcellular location is the virion membrane. It localises to the host endoplasmic reticulum membrane. It is found in the host Golgi apparatus membrane. The protein localises to the host cell membrane. In terms of biological role, functions as a cleaved signal peptide that is retained as the third component of the GP complex (GP-C). Helps to stabilize the spike complex in its native conformation. The SSP is required for efficient glycoprotein expression, post-translational maturation cleavage of G1 and G2, glycoprotein transport to the cell surface plasma membrane, formation of infectious virus particles, and acid pH-dependent glycoprotein-mediated cell fusion. Its function is as follows. Forms the virion spikes together with glycoprotein G2. The glycoprotein spike trimers are connected to the underlying matrix. Interacts with the host receptor leading to virus endocytosis. Functionally, forms the virion spikes together with glycoprotein G1. The glycoprotein spike trimers are connected to the underlying matrix. Class I viral fusion protein that directs fusion of viral and host endosomal membranes, leading to delivery of the nucleocapsid into the cytoplasm. Membrane fusion is mediated by irreversible conformational changes induced by acidification. In Sigmodon hispidus (Hispid cotton rat), this protein is Pre-glycoprotein polyprotein GP complex.